We begin with the raw amino-acid sequence, 196 residues long: Imidazoleglycerol-phosphate dehydratase (196 aa).

It belongs to the imidazoleglycerol-phosphate dehydratase family.

The protein resides in the cytoplasm. It catalyses the reaction D-erythro-1-(imidazol-4-yl)glycerol 3-phosphate = 3-(imidazol-4-yl)-2-oxopropyl phosphate + H2O. Its pathway is amino-acid biosynthesis; L-histidine biosynthesis; L-histidine from 5-phospho-alpha-D-ribose 1-diphosphate: step 6/9. The chain is Imidazoleglycerol-phosphate dehydratase from Clostridium botulinum (strain ATCC 19397 / Type A).